Here is a 324-residue protein sequence, read N- to C-terminus: Ribose-phosphate pyrophosphokinase 1 (324 aa).

ATP is bound by residues 39 to 41 (DGE) and 98 to 99 (RQ). Mg(2+) is bound by residues H132 and D174. K197 is a catalytic residue. D-ribose 5-phosphate is bound by residues R199, D223, and 227–231 (DTAGT).

This sequence belongs to the ribose-phosphate pyrophosphokinase family. Class I subfamily. As to quaternary structure, homohexamer. Mg(2+) is required as a cofactor.

The protein resides in the cytoplasm. It carries out the reaction D-ribose 5-phosphate + ATP = 5-phospho-alpha-D-ribose 1-diphosphate + AMP + H(+). Its pathway is metabolic intermediate biosynthesis; 5-phospho-alpha-D-ribose 1-diphosphate biosynthesis; 5-phospho-alpha-D-ribose 1-diphosphate from D-ribose 5-phosphate (route I): step 1/1. Functionally, involved in the biosynthesis of the central metabolite phospho-alpha-D-ribosyl-1-pyrophosphate (PRPP) via the transfer of pyrophosphoryl group from ATP to 1-hydroxyl of ribose-5-phosphate (Rib-5-P). This is Ribose-phosphate pyrophosphokinase 1 from Lactococcus lactis subsp. lactis (strain IL1403) (Streptococcus lactis).